Here is a 244-residue protein sequence, read N- to C-terminus: Tetraspanin-1 (244 aa).

4 consecutive transmembrane segments (helical) span residues 11–31, 67–87, 104–124, and 198–218; these read VLFF…AVGF, LIVV…TAVL, YLVL…AVLV, and ILLV…PILI.

It belongs to the tetraspanin (TM4SF) family.

Its subcellular location is the membrane. The protein is Tetraspanin-1 (tsp-1) of Caenorhabditis elegans.